The chain runs to 385 residues: Odorant receptor 47a (385 aa).

Topologically, residues 1 to 33 (MDSFLQVQKSTIALLGFDLFSENREMWKRPYRA) are cytoplasmic. Residues 34–54 (MNVFSIAAIFPFILAAVLHNW) form a helical membrane-spanning segment. Over 55–62 (KNVLLLAD) the chain is Extracellular. A helical membrane pass occupies residues 63–83 (AMVALLITILGLFKFSMILYL). Over 84–129 (RRDFKRLIDKFRLLMSNEAEQGEEYAEILNAANKQDQRMCTLFRTC) the chain is Cytoplasmic. Residues 130–150 (FLLAWALNSVLPLVRMGLSYW) traverse the membrane as a helical segment. The Extracellular portion of the chain corresponds to 151–175 (LAGHAEPELPFPCLFPWNIHIIRNY). A helical transmembrane segment spans residues 176 to 196 (VLSFIWSAFASTGVVLPAVSL). Residues 197–255 (DTIFCSFTSNLCAFFKIAQYKVVRFKGGSLKESQATLNKVFALYQTSLDMCNDLNQCYQ) lie on the Cytoplasmic side of the membrane. Residues 256 to 276 (PIICAQFFISSLQLCMLGYLF) form a helical membrane-spanning segment. Over 277–284 (SITFAQTE) the chain is Extracellular. Residues 285–305 (GVYYASFIATIIIQAYIYCYC) form a helical membrane-spanning segment. At 306 to 357 (GENLKTESASFEWAIYDSPWHESLGAGGASTSICRSLLISMMRAHRGFRITG) the chain is on the cytoplasmic side. The helical transmembrane segment at 358 to 378 (YFFEANMEAFSSIVRTAMSYI) threads the bilayer. Topologically, residues 379–385 (TMLRSFS) are extracellular.

This sequence belongs to the insect chemoreceptor superfamily. Heteromeric odorant receptor channel (TC 1.A.69) family. Or1a subfamily. Interacts with Orco. Complexes exist early in the endomembrane system in olfactory sensory neurons (OSNs), coupling these complexes to the conserved ciliary trafficking pathway. Expressed with Orco in 40 olfactory receptor neurons in a broad area across the antenna, including both anterior and posterior faces. This expression pattern matches the distribution of the small sensilla basiconica. Expression in the antenna is observed late in antennal development at 93 hours APF.

It is found in the cell membrane. Odorant receptor which mediates acceptance or avoidance behavior, depending on its substrates. The odorant receptor repertoire encodes a large collection of odor stimuli that vary widely in identity, intensity, and duration. Complexes with Orco to form odorant-sensing units, providing sensitive and prolonged odorant signaling and calcium permeability. They are necessary and sufficient to promote functional reconstitution of odor-evoked signaling in sensory neurons that normally respond only to carbon dioxide. Involved in the behavioral responses to esters. Involved in the behavioral responses to pentyl acetate. The polypeptide is Odorant receptor 47a (Or47a) (Drosophila melanogaster (Fruit fly)).